The sequence spans 227 residues: Cytochrome c oxidase subunit 2 (227 aa).

Residues 1-14 are Mitochondrial intermembrane-facing; the sequence is MAYPVQLGFQDAAS. A helical membrane pass occupies residues 15 to 45; it reads PIMEELLYFHDHTLMIMFLISSLVLYIISLM. The Mitochondrial matrix segment spans residues 46–59; the sequence is LTTELIHTSTMDAQ. Residues 60 to 87 traverse the membrane as a helical segment; the sequence is EVETVWTILPAVILILIALPSLRILYMM. At 88–227 the chain is on the mitochondrial intermembrane side; it reads DEISTPSLTL…HFEEWLLSML (140 aa). Residues His161, Cys196, Glu198, Cys200, His204, and Met207 each coordinate Cu cation. Glu198 contributes to the Mg(2+) binding site.

This sequence belongs to the cytochrome c oxidase subunit 2 family. As to quaternary structure, component of the cytochrome c oxidase (complex IV, CIV), a multisubunit enzyme composed of 14 subunits. The complex is composed of a catalytic core of 3 subunits MT-CO1, MT-CO2 and MT-CO3, encoded in the mitochondrial DNA, and 11 supernumerary subunits COX4I, COX5A, COX5B, COX6A, COX6B, COX6C, COX7A, COX7B, COX7C, COX8 and NDUFA4, which are encoded in the nuclear genome. The complex exists as a monomer or a dimer and forms supercomplexes (SCs) in the inner mitochondrial membrane with NADH-ubiquinone oxidoreductase (complex I, CI) and ubiquinol-cytochrome c oxidoreductase (cytochrome b-c1 complex, complex III, CIII), resulting in different assemblies (supercomplex SCI(1)III(2)IV(1) and megacomplex MCI(2)III(2)IV(2)). Found in a complex with TMEM177, COA6, COX18, COX20, SCO1 and SCO2. Interacts with TMEM177 in a COX20-dependent manner. Interacts with COX20. Interacts with COX16. Requires Cu cation as cofactor.

The protein localises to the mitochondrion inner membrane. It catalyses the reaction 4 Fe(II)-[cytochrome c] + O2 + 8 H(+)(in) = 4 Fe(III)-[cytochrome c] + 2 H2O + 4 H(+)(out). Functionally, component of the cytochrome c oxidase, the last enzyme in the mitochondrial electron transport chain which drives oxidative phosphorylation. The respiratory chain contains 3 multisubunit complexes succinate dehydrogenase (complex II, CII), ubiquinol-cytochrome c oxidoreductase (cytochrome b-c1 complex, complex III, CIII) and cytochrome c oxidase (complex IV, CIV), that cooperate to transfer electrons derived from NADH and succinate to molecular oxygen, creating an electrochemical gradient over the inner membrane that drives transmembrane transport and the ATP synthase. Cytochrome c oxidase is the component of the respiratory chain that catalyzes the reduction of oxygen to water. Electrons originating from reduced cytochrome c in the intermembrane space (IMS) are transferred via the dinuclear copper A center (CU(A)) of subunit 2 and heme A of subunit 1 to the active site in subunit 1, a binuclear center (BNC) formed by heme A3 and copper B (CU(B)). The BNC reduces molecular oxygen to 2 water molecules using 4 electrons from cytochrome c in the IMS and 4 protons from the mitochondrial matrix. The chain is Cytochrome c oxidase subunit 2 (MT-CO2) from Eulemur macaco (Black lemur).